Reading from the N-terminus, the 643-residue chain is Threonine--tRNA ligase (643 aa).

Residues 1–61 form the TGS domain; sequence MPIITLPDGS…TEDSTLEIIT (61 aa). The segment at 243–534 is catalytic; the sequence is DHRKIGKALD…ITEEYAGFFP (292 aa). The Zn(2+) site is built by C334, H385, and H511.

This sequence belongs to the class-II aminoacyl-tRNA synthetase family. As to quaternary structure, homodimer. It depends on Zn(2+) as a cofactor.

The protein resides in the cytoplasm. The catalysed reaction is tRNA(Thr) + L-threonine + ATP = L-threonyl-tRNA(Thr) + AMP + diphosphate + H(+). Its function is as follows. Catalyzes the attachment of threonine to tRNA(Thr) in a two-step reaction: L-threonine is first activated by ATP to form Thr-AMP and then transferred to the acceptor end of tRNA(Thr). Also edits incorrectly charged L-seryl-tRNA(Thr). This chain is Threonine--tRNA ligase, found in Mannheimia succiniciproducens (strain KCTC 0769BP / MBEL55E).